A 291-amino-acid polypeptide reads, in one-letter code: Succinate--CoA ligase [ADP-forming] subunit alpha 1 (291 aa).

CoA contacts are provided by residues 20–23, K46, and 99–101; these read TGFQ and VTE. Y162 lines the substrate pocket. The active-site Tele-phosphohistidine intermediate is H249.

Belongs to the succinate/malate CoA ligase alpha subunit family. Heterotetramer of two alpha and two beta subunits.

The enzyme catalyses succinate + ATP + CoA = succinyl-CoA + ADP + phosphate. It catalyses the reaction GTP + succinate + CoA = succinyl-CoA + GDP + phosphate. Its pathway is carbohydrate metabolism; tricarboxylic acid cycle; succinate from succinyl-CoA (ligase route): step 1/1. Functionally, succinyl-CoA synthetase functions in the citric acid cycle (TCA), coupling the hydrolysis of succinyl-CoA to the synthesis of either ATP or GTP and thus represents the only step of substrate-level phosphorylation in the TCA. The alpha subunit of the enzyme binds the substrates coenzyme A and phosphate, while succinate binding and nucleotide specificity is provided by the beta subunit. In Archaeoglobus fulgidus (strain ATCC 49558 / DSM 4304 / JCM 9628 / NBRC 100126 / VC-16), this protein is Succinate--CoA ligase [ADP-forming] subunit alpha 1.